The following is an 889-amino-acid chain: Cytoplasmic aconitate hydratase (889 aa).

Residues glutamine 86 and 205-207 (DSH) contribute to the substrate site. [4Fe-4S] cluster is bound by residues cysteine 437, cysteine 503, and cysteine 506. Substrate contacts are provided by residues arginine 536, arginine 541, arginine 699, and 779–780 (SR).

It belongs to the aconitase/IPM isomerase family. Interacts (when associated with the 4Fe-4S) with FBXL5. Interacts with frataxin(81-210). Requires [4Fe-4S] cluster as cofactor.

The protein localises to the cytoplasm. The protein resides in the cytosol. It catalyses the reaction citrate = D-threo-isocitrate. Its function is as follows. Bifunctional iron sensor that switches between 2 activities depending on iron availability. Iron deprivation, promotes its mRNA binding activity through which it regulates the expression of genes involved in iron uptake, sequestration and utilization. Binds to iron-responsive elements (IRES) in the untranslated region of target mRNAs preventing for instance the translation of ferritin and aminolevulinic acid synthase and stabilizing the transferrin receptor mRNA. Functionally, conversely, when cellular iron levels are high, binds a 4Fe-4S cluster which precludes RNA binding activity and promotes the aconitase activity, the isomerization of citrate to isocitrate via cis-aconitate. This is Cytoplasmic aconitate hydratase (Aco1) from Mus musculus (Mouse).